The following is a 453-amino-acid chain: UDP-N-acetylmuramoylalanine--D-glutamate ligase (453 aa).

115 to 121 (GTNGKTT) is a binding site for ATP.

Belongs to the MurCDEF family.

It localises to the cytoplasm. The enzyme catalyses UDP-N-acetyl-alpha-D-muramoyl-L-alanine + D-glutamate + ATP = UDP-N-acetyl-alpha-D-muramoyl-L-alanyl-D-glutamate + ADP + phosphate + H(+). The protein operates within cell wall biogenesis; peptidoglycan biosynthesis. In terms of biological role, cell wall formation. Catalyzes the addition of glutamate to the nucleotide precursor UDP-N-acetylmuramoyl-L-alanine (UMA). The polypeptide is UDP-N-acetylmuramoylalanine--D-glutamate ligase (Geotalea uraniireducens (strain Rf4) (Geobacter uraniireducens)).